The chain runs to 657 residues: uncharacterized protein (657 aa).

S114 is subject to Phosphoserine. Disordered regions lie at residues 142-216 (LASQ…SDEE), 228-248 (SSRE…EEEE), 291-312 (STRS…SHTP), 335-354 (SSPG…EGAD), and 399-522 (AEAS…SGRH). Positions 143 to 169 (ASQNTDKTSQNQARELPVTENNAQNAK) are enriched in polar residues. Basic and acidic residues predominate over residues 190–206 (AGKERTLQTPKQKEPAR). S213 is subject to Phosphoserine. Composition is skewed to polar residues over residues 234–243 (TNQGFSSANV) and 301–312 (SHVSSDTASHTP). Residues 343 to 354 (ETVDEPVSEGAD) are compositionally biased toward acidic residues. The segment covering 437–451 (SASSASAIQQDSTSS) has biased composition (low complexity). Positions 462 to 484 (NTVSSAYSEDFENSPSLTASEPT) are enriched in polar residues. Positions 485–495 (AHSKESLDRTL) are enriched in basic and acidic residues. The span at 499 to 513 (SESSSSVKTDLPQTA) shows a compositional bias: polar residues.

This is an uncharacterized protein from Homo sapiens (Human).